The sequence spans 237 residues: MTDHSSDKTALVLFSGGQDSATCLAWALARFARVETIGFDYGQRHLIELECRARLLDGFRAISDDWAAKLGDNHTLTIPTLAEISDTALTRDVAIAMGADGLPNTFVPGRNLIFLNFAAALAYRRGITDIVGGMCETDYSGYPDCRNDTIQALQTALSLGMARDITLHTPLMWRDKAATWQLAQDLGGDALVDLIREDSHTCYLGERGARHDWGYGCGECPACRLRSKGWIEYASGI.

Position 14-24 (14-24 (FSGGQDSATCL)) interacts with ATP. Residues Cys202, Cys217, Cys220, and Cys223 each coordinate Zn(2+).

It belongs to the QueC family. Zn(2+) serves as cofactor.

The enzyme catalyses 7-carboxy-7-deazaguanine + NH4(+) + ATP = 7-cyano-7-deazaguanine + ADP + phosphate + H2O + H(+). Its pathway is purine metabolism; 7-cyano-7-deazaguanine biosynthesis. Functionally, catalyzes the ATP-dependent conversion of 7-carboxy-7-deazaguanine (CDG) to 7-cyano-7-deazaguanine (preQ(0)). The protein is 7-cyano-7-deazaguanine synthase of Rhodopseudomonas palustris (strain TIE-1).